Reading from the N-terminus, the 361-residue chain is Riboflavin biosynthesis protein RibD (361 aa).

Residues 1-122 (MEEYYMKLAL…MMKEAGIEVR (122 aa)) form the CMP/dCMP-type deaminase domain. The deaminase stretch occupies residues 1 to 144 (MEEYYMKLAL…EKFLHFMRTG (144 aa)). A Zn(2+)-binding site is contributed by histidine 49. The active-site Proton donor is the glutamate 51. Residues cysteine 74 and cysteine 83 each contribute to the Zn(2+) site. The interval 145–361 (LPYVTLKAAA…IKLTAKPTKE (217 aa)) is reductase. Alanine 153 contributes to the NADP(+) binding site. Serine 167 lines the substrate pocket. Tryptophan 169 is a binding site for NADP(+). Arginine 183 is a substrate binding site. Threonine 195 and aspartate 199 together coordinate NADP(+). Residues leucine 203 and arginine 206 each contribute to the substrate site. Position 221 (threonine 221) interacts with NADP(+). Position 290 (glutamate 290) interacts with substrate. 292 to 298 (GSAVHGS) lines the NADP(+) pocket.

In the N-terminal section; belongs to the cytidine and deoxycytidylate deaminase family. This sequence in the C-terminal section; belongs to the HTP reductase family. Homotetramer. Zn(2+) is required as a cofactor.

It carries out the reaction 2,5-diamino-6-hydroxy-4-(5-phosphoribosylamino)-pyrimidine + H2O + H(+) = 5-amino-6-(5-phospho-D-ribosylamino)uracil + NH4(+). It catalyses the reaction 5-amino-6-(5-phospho-D-ribitylamino)uracil + NADP(+) = 5-amino-6-(5-phospho-D-ribosylamino)uracil + NADPH + H(+). Its pathway is cofactor biosynthesis; riboflavin biosynthesis; 5-amino-6-(D-ribitylamino)uracil from GTP: step 2/4. It participates in cofactor biosynthesis; riboflavin biosynthesis; 5-amino-6-(D-ribitylamino)uracil from GTP: step 3/4. Functionally, converts 2,5-diamino-6-(ribosylamino)-4(3h)-pyrimidinone 5'-phosphate into 5-amino-6-(ribosylamino)-2,4(1h,3h)-pyrimidinedione 5'-phosphate. The polypeptide is Riboflavin biosynthesis protein RibD (ribD) (Bacillus subtilis (strain 168)).